We begin with the raw amino-acid sequence, 1387 residues long: DNA-directed RNA polymerase subunit beta (1387 aa).

The protein belongs to the RNA polymerase beta chain family. As to quaternary structure, the RNAP catalytic core consists of 2 alpha, 1 beta, 1 beta' and 1 omega subunit. When a sigma factor is associated with the core the holoenzyme is formed, which can initiate transcription.

It carries out the reaction RNA(n) + a ribonucleoside 5'-triphosphate = RNA(n+1) + diphosphate. Functionally, DNA-dependent RNA polymerase catalyzes the transcription of DNA into RNA using the four ribonucleoside triphosphates as substrates. The chain is DNA-directed RNA polymerase subunit beta from Xanthomonas campestris pv. campestris (strain ATCC 33913 / DSM 3586 / NCPPB 528 / LMG 568 / P 25).